The primary structure comprises 217 residues: uncharacterized protein (217 aa).

It belongs to the IIV-6 309L family.

This is an uncharacterized protein from Acheta domesticus (House cricket).